A 340-amino-acid chain; its full sequence is Putative transport protein AF_1800 (340 aa).

A run of 7 helical transmembrane segments spans residues 7 to 27, 57 to 77, 140 to 160, 193 to 213, 225 to 245, 260 to 280, and 290 to 310; these read LVLL…FTPL, SVIA…YGLI, TLLI…LADM, LWFG…PFFL, GLMF…ILPV, FLLI…RPYF, and LVLM…GFFI.

The protein belongs to the autoinducer-2 exporter (AI-2E) (TC 2.A.86) family.

It localises to the cell membrane. This is Putative transport protein AF_1800 from Archaeoglobus fulgidus (strain ATCC 49558 / DSM 4304 / JCM 9628 / NBRC 100126 / VC-16).